The sequence spans 241 residues: Small ribosomal subunit protein uS2 (241 aa).

The protein belongs to the universal ribosomal protein uS2 family.

The polypeptide is Small ribosomal subunit protein uS2 (Sodalis glossinidius (strain morsitans)).